The following is a 46-amino-acid chain: Large ribosomal subunit protein bL36A (46 aa).

It belongs to the bacterial ribosomal protein bL36 family.

This chain is Large ribosomal subunit protein bL36A, found in Sodalis glossinidius (strain morsitans).